A 305-amino-acid polypeptide reads, in one-letter code: Porphobilinogen deaminase (305 aa).

Cys239 is subject to S-(dipyrrolylmethanemethyl)cysteine.

This sequence belongs to the HMBS family. Monomer. The cofactor is dipyrromethane.

It catalyses the reaction 4 porphobilinogen + H2O = hydroxymethylbilane + 4 NH4(+). Its pathway is porphyrin-containing compound metabolism; protoporphyrin-IX biosynthesis; coproporphyrinogen-III from 5-aminolevulinate: step 2/4. Tetrapolymerization of the monopyrrole PBG into the hydroxymethylbilane pre-uroporphyrinogen in several discrete steps. This is Porphobilinogen deaminase from Dichelobacter nodosus (strain VCS1703A).